The primary structure comprises 417 residues: MEMASGGGAAAAAGGGVGGSGGGGGGGDEHRQLHGLKFGKKIYFEDAAAAAGGGGTGSGSGSASAAPPSSSSKAAGGGRGGGGKNKGKGVAAAAPPPPPPPPRCQVEGCGADLSGIKNYYCRHKVCFMHSKAPRVVVAGLEQRFCQQCSRFHLLPEFDQGKRSCRRRLAGHNERRRRPQTPLASRYGRLAASVGEHRRFRSFTLDFSYPRVPSSVRNAWPAIQPGDRISGGIQWHRNVAPHGHSSAVAGYGANTYSGQGSSSSGPPVFAGPNLPPGGCLAGVGAATDSSCALSLLSTQPWDTTTHSAAASHNQAAAMSTTTSFDGNPVAPSAMAGSYMAPSPWTGSRGHEGGGRSVAHQLPHEVSLDEVHPGPSHHAHFSGELELALQGNGPAPAPRIDPGSGSTFDQTSNTMDWSL.

2 stretches are compositionally biased toward gly residues: residues 1 to 26 (MEMA…GGGG) and 51 to 60 (AGGGGTGSGS). Disordered regions lie at residues 1–32 (MEMA…EHRQ) and 51–102 (AGGG…PPPP). Over residues 61–74 (GSASAAPPSSSSKA) the composition is skewed to low complexity. A compositionally biased stretch (gly residues) spans 75-84 (AGGGRGGGGK). Residues 101–178 (PPRCQVEGCG…AGHNERRRRP (78 aa)) form an SBP-type zinc finger. Cysteine 104, cysteine 109, cysteine 126, histidine 129, cysteine 145, cysteine 148, and histidine 152 together coordinate Zn(2+). The short motif at 161–177 (KRSCRRRLAGHNERRRR) is the Bipartite nuclear localization signal element. Residue serine 163 is modified to Phosphoserine. Cysteine 164 is a binding site for Zn(2+). The tract at residues 387-417 (LQGNGPAPAPRIDPGSGSTFDQTSNTMDWSL) is disordered. The segment covering 402 to 417 (SGSTFDQTSNTMDWSL) has biased composition (polar residues).

In terms of assembly, interacts with PCF1 and PCF2. Interacts with IPI1. Interacts with D53. Interacts with SLR1. Interacts (via C-terminus) with SHI1. Post-translationally, phosphorylated at Ser-163 in response to infection by the fungal pathogen Magnaporthe oryzae. In terms of processing, ubiquitinated by IPI1, which leads to proteasomal degradation. In terms of tissue distribution, expressed in young panicles. Expressed in the shoot apex at both the vegetative and reproductive stages. Highly expressed in the promordia of primary and secondary branches. Highly expressed in young panicles.

Its subcellular location is the nucleus. Functionally, transcriptional activator that binds to the SBP-box DNA core binding motif 5'-GTAC-3'. Can target the TCP motif 5'-TGGGCC/T-3' through interaction with PCF1 and PCF2. Key regulator of the plant architecture that controls shoot branching and panicle development. Promotes panicle branching. Promotes high grain yield. Binds to the promoters of TB1 and DEP1. Suppresses rice tillering mainly through positive regulation of TB1. Regulates plant height and panicle length through positive regulation of DEP1. Repressed by D53 in strigolactone (SL) signaling. Acts with D53 to mediate the SL-regulated tiller development. Functions as a direct downstream component of D53 in regulating tiller number and SL-induced gene expression. Binds directly to the D53 promoter and plays a critical role in the negative feedback regulation of SL-induced D53 expression. Involved in defense response against pathogens. Phosphorylated at Ser-163 in response to infection by the fungal pathogen Magnaporthe oryzae. Phosphorylation reduces SPL14/IPA1 binding to the GTAC site in the DEP1 promoter and enhances binding to the TGGGCC site in the WRKY45 promoter. Binding to the promoter of the pathogen defense gene WRKY45 activates its expression, leading to enhanced disease resistance. Reduces gibberellin-mediated disease susceptibility by stabilizing SLR1. Possesses transactivation activity in yeast cells. This chain is Squamosa promoter-binding-like protein 14, found in Oryza sativa subsp. japonica (Rice).